A 77-amino-acid polypeptide reads, in one-letter code: Conotoxin PnMKLT1-0122 (77 aa).

A signal peptide spans 1–22 (MKLTCMMIVAVLFLTAWTFATA). The propeptide occupies 23 to 49 (EDPRNGLENLFSKAHHEMKNPEDSKLN). 3 disulfide bridges follow: cysteine 52–cysteine 67, cysteine 59–cysteine 71, and cysteine 66–cysteine 76.

The protein belongs to the conotoxin O1 superfamily. Expressed by the venom duct.

The protein resides in the secreted. The protein is Conotoxin PnMKLT1-0122 of Conus pennaceus (Feathered cone).